The primary structure comprises 365 residues: Protein BIIDXI (365 aa).

A signal peptide spans 1-21 (MKEMGVIVLLLLHSFFYVAFC). 3 N-linked (GlcNAc...) asparagine glycosylation sites follow: asparagine 48, asparagine 121, and asparagine 208.

In terms of assembly, interacts with PME3. Mainly expressed in vascular tissues of roots, leaves, stamens and petals.

The protein resides in the secreted. Its subcellular location is the cell wall. Together with At5g11420, acts as a positive regulator of PME3 activity during several developmental processes, including reproductive organ development, hypocotyls elongation, seed germination and endosperm (testa) rupture at the micropyle, probably by modulating the pectin methylation status in cell walls. Involved in the regulation of pectin methylation degree to modulate cell wall physiology during cell separation, hypocotyl growth and embryo development. Required during embryo development, especially to regulate homogalacturonans (HG) methyl esterification in endosperm cell walls, a process related to embryo bending. Also implicated in hypocotyl growth and gravitropic response via the regulation of auxin efflux. Also regulates cell wall pectin upon root-knot nematode Meloidogyne incognita infection. The polypeptide is Protein BIIDXI (Arabidopsis thaliana (Mouse-ear cress)).